The primary structure comprises 213 residues: Holliday junction branch migration complex subunit RuvA (213 aa).

Residues 1–64 (MIASVTGEVA…DEAPLLFGFA (64 aa)) form a domain I region. The interval 65–143 (QGDEKEIFTV…LPEPPVQQAN (79 aa)) is domain II. The flexible linker stretch occupies residues 144-152 (QPQVPVWRD). Residues 152 to 213 (DQVVDALTGL…GTTHAPTGRR (62 aa)) form a domain III region.

The protein belongs to the RuvA family. Homotetramer. Forms an RuvA(8)-RuvB(12)-Holliday junction (HJ) complex. HJ DNA is sandwiched between 2 RuvA tetramers; dsDNA enters through RuvA and exits via RuvB. An RuvB hexamer assembles on each DNA strand where it exits the tetramer. Each RuvB hexamer is contacted by two RuvA subunits (via domain III) on 2 adjacent RuvB subunits; this complex drives branch migration. In the full resolvosome a probable DNA-RuvA(4)-RuvB(12)-RuvC(2) complex forms which resolves the HJ.

Its subcellular location is the cytoplasm. Its function is as follows. The RuvA-RuvB-RuvC complex processes Holliday junction (HJ) DNA during genetic recombination and DNA repair, while the RuvA-RuvB complex plays an important role in the rescue of blocked DNA replication forks via replication fork reversal (RFR). RuvA specifically binds to HJ cruciform DNA, conferring on it an open structure. The RuvB hexamer acts as an ATP-dependent pump, pulling dsDNA into and through the RuvAB complex. HJ branch migration allows RuvC to scan DNA until it finds its consensus sequence, where it cleaves and resolves the cruciform DNA. The sequence is that of Holliday junction branch migration complex subunit RuvA from Kocuria rhizophila (strain ATCC 9341 / DSM 348 / NBRC 103217 / DC2201).